The primary structure comprises 364 residues: tRNA(Met) cytidine acetate ligase (364 aa).

ATP is bound by residues isoleucine 7–leucine 20, glycine 96, asparagine 152, and arginine 175.

It belongs to the TmcAL family.

The protein resides in the cytoplasm. It catalyses the reaction cytidine(34) in elongator tRNA(Met) + acetate + ATP = N(4)-acetylcytidine(34) in elongator tRNA(Met) + AMP + diphosphate. In terms of biological role, catalyzes the formation of N(4)-acetylcytidine (ac(4)C) at the wobble position of elongator tRNA(Met), using acetate and ATP as substrates. First activates an acetate ion to form acetyladenylate (Ac-AMP) and then transfers the acetyl group to tRNA to form ac(4)C34. In Streptococcus sanguinis (strain SK36), this protein is tRNA(Met) cytidine acetate ligase.